We begin with the raw amino-acid sequence, 31 residues long: Photosystem II reaction center protein T (31 aa).

The helical transmembrane segment at Ala3–Phe23 threads the bilayer.

This sequence belongs to the PsbT family. As to quaternary structure, PSII is composed of 1 copy each of membrane proteins PsbA, PsbB, PsbC, PsbD, PsbE, PsbF, PsbH, PsbI, PsbJ, PsbK, PsbL, PsbM, PsbT, PsbY, PsbZ, Psb30/Ycf12, at least 3 peripheral proteins of the oxygen-evolving complex and a large number of cofactors. It forms dimeric complexes.

The protein localises to the plastid. It is found in the chloroplast thylakoid membrane. Functionally, found at the monomer-monomer interface of the photosystem II (PS II) dimer, plays a role in assembly and dimerization of PSII. PSII is a light-driven water plastoquinone oxidoreductase, using light energy to abstract electrons from H(2)O, generating a proton gradient subsequently used for ATP formation. The sequence is that of Photosystem II reaction center protein T from Ostreococcus tauri.